We begin with the raw amino-acid sequence, 298 residues long: Mitochondrial glycine transporter (298 aa).

3 Solcar repeats span residues 5–84 (TKTR…MRTA), 105–189 (LTTY…AKEV), and 211–295 (TSTL…LIKL). The next 6 helical transmembrane spans lie at 11 to 36 (LIGGFFGGLTSAVALQPLDLLKTRIQ), 59 to 85 (GTLPSAIRTSLGSALYLSSLNLMRTAI), 111 to 136 (LISGALARGAVGYMTMPVTVIKVRYE), 164 to 187 (GFGPTLVRDAPYSGIYVLLYEKAK), 215 to 241 (VNSTSAILSACLATTITAPFDTIKTRM), and 270 to 288 (GLSMRLTRKALSAGIAWGI).

This sequence belongs to the mitochondrial carrier (TC 2.A.29) family. SLC25A38 subfamily.

Its subcellular location is the mitochondrion inner membrane. It catalyses the reaction glycine(in) = glycine(out). In terms of biological role, mitochondrial glycine transporter that imports glycine into the mitochondrial matrix. Plays an important role in providing glycine for the first enzymatic step in heme biosynthesis, the condensation of glycine with succinyl-CoA to produce 5-aminolevulinate (ALA) in the mitochondrial matrix. This Vanderwaltozyma polyspora (strain ATCC 22028 / DSM 70294 / BCRC 21397 / CBS 2163 / NBRC 10782 / NRRL Y-8283 / UCD 57-17) (Kluyveromyces polysporus) protein is Mitochondrial glycine transporter.